Consider the following 132-residue polypeptide: Large ribosomal subunit protein uL14 (132 aa).

This sequence belongs to the universal ribosomal protein uL14 family. Part of the 50S ribosomal subunit. Forms a cluster with proteins L3 and L24e, part of which may contact the 16S rRNA in 2 intersubunit bridges.

In terms of biological role, binds to 23S rRNA. Forms part of two intersubunit bridges in the 70S ribosome. This chain is Large ribosomal subunit protein uL14, found in Archaeoglobus fulgidus (strain ATCC 49558 / DSM 4304 / JCM 9628 / NBRC 100126 / VC-16).